The sequence spans 313 residues: tRNA pseudouridine synthase B (313 aa).

His-44 is a substrate binding site. Asp-49 (nucleophile) is an active-site residue. Substrate contacts are provided by Tyr-77, Tyr-180, and Leu-201.

This sequence belongs to the pseudouridine synthase TruB family. Type 1 subfamily.

The enzyme catalyses uridine(55) in tRNA = pseudouridine(55) in tRNA. Responsible for synthesis of pseudouridine from uracil-55 in the psi GC loop of transfer RNAs. This is tRNA pseudouridine synthase B from Hamiltonella defensa subsp. Acyrthosiphon pisum (strain 5AT).